The chain runs to 316 residues: MDWKLEGSAQKTESRVLQEHEITLDDPGEDGVSESFQLLQIDVGCEHWEQETLPTGSAAWCSKNVQRKQRHWEKIVAAKKSKRKQEKERRKANRVENSGIYPQHSKRFLRSLIKERLLEAKHSGPRLCIDLSMTNHMSKKELSRLAGQIRRLYGSNKKADRPFWIYLTGFTTDSPLYEECLRMNDGFSSYLLDRTEEDCFSLFPLETLVYLTPDSDHALENVDLNKVYILGGLVDESIQKKVTFQKAQEHSVKTARLPIQEYMVKCQNGKNYHSEILTINQVFDILSTYFETQNWPEALKKGVSSRKGYVLRNSVE.

Residues E73–S98 adopt a coiled-coil conformation. The disordered stretch occupies residues A77–E96. In terms of domain architecture, SAM-dependent MTase TRM10-type spans I113 to V310.

This sequence belongs to the class IV-like SAM-binding methyltransferase superfamily. TRM10 family.

The enzyme catalyses guanosine(9) in tRNA + S-adenosyl-L-methionine = N(1)-methylguanosine(9) in tRNA + S-adenosyl-L-homocysteine + H(+). In terms of biological role, S-adenosyl-L-methionine-dependent guanine N(1)-methyltransferase that catalyzes the formation of N(1)-methylguanine at position 9 (m1G9) in tRNAs. Probably not able to catalyze formation of N(1)-methyladenine at position 9 (m1A9) in tRNAs. This chain is tRNA methyltransferase 10 homolog B (TRMT10B), found in Bos taurus (Bovine).